A 110-amino-acid chain; its full sequence is MEAKAKLRYVRLSPRKTRLVVDMVRGKKVQEALNILRFSPQKAASIVYQLVGSAVANAEQKGVADVDRLFIESISVDQGPVLKRFMPRAQGRATRIRKPTSHITVVLNEK.

The protein belongs to the universal ribosomal protein uL22 family. As to quaternary structure, part of the 50S ribosomal subunit.

This protein binds specifically to 23S rRNA; its binding is stimulated by other ribosomal proteins, e.g. L4, L17, and L20. It is important during the early stages of 50S assembly. It makes multiple contacts with different domains of the 23S rRNA in the assembled 50S subunit and ribosome. Functionally, the globular domain of the protein is located near the polypeptide exit tunnel on the outside of the subunit, while an extended beta-hairpin is found that lines the wall of the exit tunnel in the center of the 70S ribosome. The polypeptide is Large ribosomal subunit protein uL22 (Syntrophotalea carbinolica (strain DSM 2380 / NBRC 103641 / GraBd1) (Pelobacter carbinolicus)).